Consider the following 88-residue polypeptide: Cell division topological specificity factor (88 aa).

The protein belongs to the MinE family.

Prevents the cell division inhibition by proteins MinC and MinD at internal division sites while permitting inhibition at polar sites. This ensures cell division at the proper site by restricting the formation of a division septum at the midpoint of the long axis of the cell. This Clostridium novyi (strain NT) protein is Cell division topological specificity factor.